The chain runs to 65 residues: Large ribosomal subunit protein bL28 (65 aa).

It belongs to the bacterial ribosomal protein bL28 family.

The sequence is that of Large ribosomal subunit protein bL28 from Lachnoclostridium phytofermentans (strain ATCC 700394 / DSM 18823 / ISDg) (Clostridium phytofermentans).